Reading from the N-terminus, the 521-residue chain is NADH-quinone oxidoreductase subunit N (521 aa).

A run of 14 helical transmembrane segments spans residues 15–35 (LAPELILAAMFLILIVTDLIL), 43–63 (IIGWLSLAGLLLSLAAVIWRM), 98–118 (LLKIIFLIGTSLVVLLGLGST), 128–148 (AEFYYLLLPAAAGAMIMASSG), 150–170 (LVTLYIGLELLSITTYVLVGL), 185–205 (VVTGGIASAFVLFGMSYLYGV), 227–247 (ALVYVGFFFLIAGFGIKIAAA), 261–281 (PTPVSAFLAVIAKGAALAAVF), 303–323 (VFFALLVIAAAAMIAGTVSAL), 331–351 (LLALSGVANAGYLLVPIAISV), 363–383 (VFYLVAYLLMNVGAFAVVTVI), 406–426 (AAAMLIFILSFSGLPVTAGFF), 442–462 (WLVAIMVVSTVISYYFYFGII), and 485–505 (TVIWICAAATVALGVLPGPLM).

The protein belongs to the complex I subunit 2 family. NDH-1 is composed of 14 different subunits. Subunits NuoA, H, J, K, L, M, N constitute the membrane sector of the complex.

It localises to the cell membrane. The catalysed reaction is a quinone + NADH + 5 H(+)(in) = a quinol + NAD(+) + 4 H(+)(out). Functionally, NDH-1 shuttles electrons from NADH, via FMN and iron-sulfur (Fe-S) centers, to quinones in the respiratory chain. The immediate electron acceptor for the enzyme in this species is believed to be a menaquinone. Couples the redox reaction to proton translocation (for every two electrons transferred, four hydrogen ions are translocated across the cytoplasmic membrane), and thus conserves the redox energy in a proton gradient. The sequence is that of NADH-quinone oxidoreductase subunit N from Paenibacillus sp. (strain JDR-2).